A 193-amino-acid chain; its full sequence is Homeobox protein HD-12 (193 aa).

The homeobox; TALE-type DNA-binding region spans 123-185; it reads SVIRRINFPK…NARRRILPFM (63 aa).

The protein belongs to the TALE/KNOX homeobox family.

The protein resides in the nucleus. The chain is Homeobox protein HD-12 (HD-12) from Encephalitozoon cuniculi (strain GB-M1) (Microsporidian parasite).